The primary structure comprises 233 residues: Large ribosomal subunit protein uL1 (233 aa).

It belongs to the universal ribosomal protein uL1 family. Part of the 50S ribosomal subunit.

In terms of biological role, binds directly to 23S rRNA. The L1 stalk is quite mobile in the ribosome, and is involved in E site tRNA release. Its function is as follows. Protein L1 is also a translational repressor protein, it controls the translation of the L11 operon by binding to its mRNA. The sequence is that of Large ribosomal subunit protein uL1 from Deinococcus geothermalis (strain DSM 11300 / CIP 105573 / AG-3a).